Here is a 184-residue protein sequence, read N- to C-terminus: Large ribosomal subunit protein uL6 (184 aa).

It belongs to the universal ribosomal protein uL6 family. Part of the 50S ribosomal subunit.

This protein binds to the 23S rRNA, and is important in its secondary structure. It is located near the subunit interface in the base of the L7/L12 stalk, and near the tRNA binding site of the peptidyltransferase center. The polypeptide is Large ribosomal subunit protein uL6 (Thermosipho melanesiensis (strain DSM 12029 / CIP 104789 / BI429)).